A 499-amino-acid chain; its full sequence is Sialic acid-binding Ig-like lectin 8 (499 aa).

An N-terminal signal peptide occupies residues 1-16 (MLLLLLLLPLLWGTKG). Over 17–363 (MEGDRQYGDG…RPVSQVTLAA (347 aa)) the chain is Extracellular. Residues Tyr-23, 72–75 (RPYQ), Arg-125, and 134–138 (SYKSQ) each bind a carbohydrate. Residues 40 to 123 (GLCVHVPCSF…ARKRDKGSYF (84 aa)) form the Ig-like V-type domain. 3 cysteine pairs are disulfide-bonded: Cys-42–Cys-181, Cys-47–Cys-107, and Cys-175–Cys-224. 2 consecutive Ig-like C2-type domains span residues 157–240 (PDIL…STVR) and 246–344 (PPWN…LSLS). A glycan (N-linked (GlcNAc...) asparagine) is linked at Asn-172. 2 N-linked (GlcNAc...) asparagine glycosylation sites follow: Asn-249 and Asn-267. Cys-283 and Cys-328 form a disulfide bridge. A helical membrane pass occupies residues 364–384 (VGGAGATALAFLSFCIIFIIV). The Cytoplasmic portion of the chain corresponds to 385 to 499 (RSCRKKSARP…HNPSSKEVRG (115 aa)). A disordered region spans residues 410–443 (RGSASQGPLTESWKDGNPLKKPPPAVAPSSGEEG). The ITIM motif signature appears at 445–450 (LHYATL). 2 disordered regions span residues 451–470 (SFHK…DSEY) and 478–499 (RETA…EVRG). The SLAM-like motif signature appears at 468–473 (SEYSEI).

It belongs to the immunoglobulin superfamily. SIGLEC (sialic acid binding Ig-like lectin) family. As to expression, expressed specifically on blood cells namely basophil, mast cells and eosinophils.

The protein resides in the membrane. Putative adhesion molecule that mediates sialic-acid dependent binding to blood cells. Preferentially binds to alpha-2,3-linked sialic acid. Also binds to alpha-2,6-linked sialic acid. The sialic acid recognition site may be masked by cis interactions with sialic acids on the same cell surface. Recognizes simultaneously epitopes having a terminal N-acetylneuraminic acid (sialic acid) and an underlying 6-O-sulfated galactose. Preferentially binds to Gal-6-sulfated sialyl-Lewis X glycan epitopes. The chain is Sialic acid-binding Ig-like lectin 8 (SIGLEC8) from Homo sapiens (Human).